The primary structure comprises 120 residues: uncharacterized protein (120 aa).

The chain crosses the membrane as a helical span at residues 22–44; the sequence is ITVASCIGAAQGALFSIASALLL. Residue Asn114 is glycosylated (N-linked (GlcNAc...) asparagine).

It localises to the membrane. This is an uncharacterized protein from Saccharomyces cerevisiae (strain ATCC 204508 / S288c) (Baker's yeast).